A 567-amino-acid chain; its full sequence is uncharacterized protein (567 aa).

The Lumenal segment spans residues 1–31 (MLDTILINVFRRDGDDDDDDGQDPALQELYS). A helical transmembrane segment spans residues 32–52 (SWALFILLVLLIGALLTSYYV). Topologically, residues 53–64 (QSKKIRAIHETV) are cytoplasmic. The chain crosses the membrane as a helical span at residues 65–85 (ISVFVGMVVGLIIRVSPGLII). At 86–87 (QN) the chain is on the lumenal side. Residues 88 to 108 (MVSFHSTYFFNVLLPPIILNS) traverse the membrane as a helical segment. Over 109–128 (GYELHQSNFFRNIGTILTFA) the chain is Cytoplasmic. The chain crosses the membrane as a helical span at residues 129–149 (FAGTFISAVTLGVLVYIFSFL). Over 150–159 (NFENLSMTFV) the chain is Lumenal. Residues 160 to 180 (EALSMGATLSATDPVTVLAIF) traverse the membrane as a helical segment. At 181–188 (NSYKVDQK) the chain is on the cytoplasmic side. Residues 189–209 (LYTIIFGESILNDAVAIVMFE) traverse the membrane as a helical segment. At 210–227 (TLQQFQGKTLHFFTLFSG) the chain is on the lumenal side. Residues 228 to 248 (IGIFIITFFISLLIGVSIGLI) form a helical membrane-spanning segment. The Cytoplasmic segment spans residues 249–277 (TALLLKYSYLRRYPSIESCIILLMAYTSY). Residues 278–298 (FFSNGCHMSGVVSLLFCGITL) traverse the membrane as a helical segment. Over 299-315 (KHYAFFNMSYKAKLSTK) the chain is Lumenal. The chain crosses the membrane as a helical span at residues 316-338 (YVFRVLAQLSENFIFIYLGMSLF). Topologically, residues 339–347 (TQVDLVYKP) are cytoplasmic. Residues 348–366 (IFILITTVAVTASRYMNVF) form a helical membrane-spanning segment. Topologically, residues 367–392 (PLSNLLNKFHRQRNGNLIDHIPYSYQ) are lumenal. A helical transmembrane segment spans residues 393–413 (MMLFWAGLRGAVGVALAAGFE). Residues 414–424 (GENAQTLRATT) lie on the Cytoplasmic side of the membrane. Residues 425-445 (LVVVVLTLIIFGGTTARMLEI) traverse the membrane as a helical segment. Residues 446–567 (LHIETGVAAD…RDNLKNGTKK (122 aa)) are Lumenal-facing. Serine 515 is modified (phosphoserine).

The protein belongs to the monovalent cation:proton antiporter 1 (CPA1) transporter (TC 2.A.36) family.

It localises to the golgi apparatus membrane. This is an uncharacterized protein from Schizosaccharomyces pombe (strain 972 / ATCC 24843) (Fission yeast).